Here is a 543-residue protein sequence, read N- to C-terminus: Chaperonin GroEL 2 (543 aa).

ATP-binding positions include 29–32 (TLGP), 86–90 (DGTTT), Gly413, 477–479 (DAA), and Asp493. The segment at 523-543 (PQEPEPAAGGHGHGHQHGPGF) is disordered. Residues 534–543 (GHGHQHGPGF) are compositionally biased toward basic residues.

The protein belongs to the chaperonin (HSP60) family. In terms of assembly, forms a cylinder of 14 subunits composed of two heptameric rings stacked back-to-back. Interacts with the co-chaperonin GroES.

The protein resides in the cytoplasm. The catalysed reaction is ATP + H2O + a folded polypeptide = ADP + phosphate + an unfolded polypeptide.. Functionally, together with its co-chaperonin GroES, plays an essential role in assisting protein folding. The GroEL-GroES system forms a nano-cage that allows encapsulation of the non-native substrate proteins and provides a physical environment optimized to promote and accelerate protein folding. This is Chaperonin GroEL 2 from Salinispora tropica (strain ATCC BAA-916 / DSM 44818 / JCM 13857 / NBRC 105044 / CNB-440).